Here is a 105-residue protein sequence, read N- to C-terminus: Met repressor (105 aa).

Belongs to the MetJ family. In terms of assembly, homodimer.

It localises to the cytoplasm. Its function is as follows. This regulatory protein, when combined with SAM (S-adenosylmethionine) represses the expression of the methionine regulon and of enzymes involved in SAM synthesis. This Histophilus somni (strain 129Pt) (Haemophilus somnus) protein is Met repressor.